We begin with the raw amino-acid sequence, 549 residues long: Glucose-6-phosphate isomerase (549 aa).

The active-site Proton donor is the Glu-355. Active-site residues include His-386 and Lys-514.

Belongs to the GPI family.

Its subcellular location is the cytoplasm. The catalysed reaction is alpha-D-glucose 6-phosphate = beta-D-fructose 6-phosphate. The protein operates within carbohydrate biosynthesis; gluconeogenesis. It functions in the pathway carbohydrate degradation; glycolysis; D-glyceraldehyde 3-phosphate and glycerone phosphate from D-glucose: step 2/4. Catalyzes the reversible isomerization of glucose-6-phosphate to fructose-6-phosphate. This chain is Glucose-6-phosphate isomerase, found in Klebsiella pneumoniae subsp. pneumoniae (strain ATCC 700721 / MGH 78578).